The sequence spans 456 residues: Glutamyl-tRNA reductase (456 aa).

Substrate is bound by residues 49 to 52, serine 109, 114 to 116, and glutamine 120; these read TCNR and EQQ. The Nucleophile role is filled by cysteine 50. Residue 189–194 coordinates NADP(+); the sequence is GAGSMG.

The protein belongs to the glutamyl-tRNA reductase family. In terms of assembly, homodimer.

It catalyses the reaction (S)-4-amino-5-oxopentanoate + tRNA(Glu) + NADP(+) = L-glutamyl-tRNA(Glu) + NADPH + H(+). It functions in the pathway porphyrin-containing compound metabolism; protoporphyrin-IX biosynthesis; 5-aminolevulinate from L-glutamyl-tRNA(Glu): step 1/2. Its function is as follows. Catalyzes the NADPH-dependent reduction of glutamyl-tRNA(Glu) to glutamate 1-semialdehyde (GSA). In Mycolicibacterium vanbaalenii (strain DSM 7251 / JCM 13017 / BCRC 16820 / KCTC 9966 / NRRL B-24157 / PYR-1) (Mycobacterium vanbaalenii), this protein is Glutamyl-tRNA reductase.